The primary structure comprises 227 residues: Class I hydrophobin A (227 aa).

The signal sequence occupies residues 1-18; the sequence is MQFSLSAIVLGLAATVYA. An N-linked (GlcNAc...) asparagine glycan is attached at Asn-50. Cystine bridges form between Cys-60–Cys-138, Cys-68–Cys-132, and Cys-69–Cys-109.

The protein belongs to the fungal hydrophobin family.

The protein localises to the secreted. Its subcellular location is the cell wall. In terms of biological role, aerial growth, conidiation, and dispersal of filamentous fungi in the environment rely upon a capability of their secreting small amphipathic proteins called hydrophobins (HPBs) with low sequence identity. Class I can self-assemble into an outermost layer of rodlet bundles on aerial cell surfaces, conferring cellular hydrophobicity that supports fungal growth, development and dispersal; whereas Class II form highly ordered films at water-air interfaces through intermolecular interactions but contribute nothing to the rodlet structure. In P.expansum, hydrophobins contribute to germination, tolerance to cold stress and mycotoxins patulin and citrinin production. HfbA and HfbB are essential for fungal surface hydrophobicity and HfbA mediates air and water dispersal. The sequence is that of Class I hydrophobin A from Penicillium expansum (Blue mold rot fungus).